The following is a 546-amino-acid chain: 2-isopropylmalate synthase (546 aa).

In terms of domain architecture, Pyruvate carboxyltransferase spans Ile8–Ser271. Positions 17, 208, 210, and 244 each coordinate Mn(2+). The segment at Gln408–Lys546 is regulatory domain.

This sequence belongs to the alpha-IPM synthase/homocitrate synthase family. LeuA type 1 subfamily. Homodimer. Requires Mn(2+) as cofactor.

Its subcellular location is the cytoplasm. It carries out the reaction 3-methyl-2-oxobutanoate + acetyl-CoA + H2O = (2S)-2-isopropylmalate + CoA + H(+). Its pathway is amino-acid biosynthesis; L-leucine biosynthesis; L-leucine from 3-methyl-2-oxobutanoate: step 1/4. Catalyzes the condensation of the acetyl group of acetyl-CoA with 3-methyl-2-oxobutanoate (2-ketoisovalerate) to form 3-carboxy-3-hydroxy-4-methylpentanoate (2-isopropylmalate). This Prochlorococcus marinus (strain MIT 9215) protein is 2-isopropylmalate synthase.